A 225-amino-acid chain; its full sequence is Chromosome partition protein MukE (225 aa).

The disordered stretch occupies residues 197 to 225; that stretch reads RDGEAMPIENHLQLNDETEENQPDSGEEE. Over residues 212–225 the composition is skewed to acidic residues; it reads DETEENQPDSGEEE.

It belongs to the MukE family. As to quaternary structure, interacts, and probably forms a ternary complex, with MukF and MukB. The complex formation is stimulated by calcium or magnesium.

It localises to the cytoplasm. Its subcellular location is the nucleoid. In terms of biological role, involved in chromosome condensation, segregation and cell cycle progression. May participate in facilitating chromosome segregation by condensation DNA from both sides of a centrally located replisome during cell division. Probably acts via its interaction with MukB and MukF. This Escherichia coli O157:H7 protein is Chromosome partition protein MukE.